The sequence spans 68 residues: UPF0434 protein BMA10229_A1047 (68 aa).

This sequence belongs to the UPF0434 family.

This chain is UPF0434 protein BMA10229_A1047, found in Burkholderia mallei (strain NCTC 10229).